A 614-amino-acid polypeptide reads, in one-letter code: Vitamin B12 transporter BtuB (614 aa).

Residues 1 to 20 (MIKKASLLTACSVTAFSAWA) form the signal peptide. The short motif at 26–33 (DTLVVTAN) is the TonB box element. One can recognise a TBDR plug domain in the interval 38 to 152 (PRSTVLAPTT…IGGVVNIITT (115 aa)). Residues leucine 83, serine 85, asparagine 92, and 110–111 (VS) each bind cyanocob(III)alamin. Residues 155-614 (EPGTEISAGW…EYTLSGSYTF (460 aa)) form the TBDR beta-barrel domain. 3 consecutive transmembrane segments (beta stranded) span residues 158–165 (TEISAGWG), 169–178 (YQNYDVSTQQ), and 184–195 (TRVTLLGDYAHT). Residues aspartate 199, glutamine 211, aspartate 213, and aspartate 215 each contribute to the Ca(2+) site. 2 beta stranded membrane passes run 217 to 227 (FLSKTLYGALE) and 232 to 248 (DAWSGFVRGYGYDNRTN). Residues tyrosine 249 and aspartate 250 each coordinate Ca(2+). Position 251 (alanine 251) interacts with cyanocob(III)alamin. Aspartate 261 contributes to the Ca(2+) binding site. Transmembrane regions (beta stranded) follow at residues 263 to 277 (RKLYSQSWDAGLRYN), 279 to 296 (ELIKSQLITSYSHSKDYN), 309 to 325 (TLDEMKQYTVQWANNII), 328 to 337 (HGNVGAGVDW), 353 to 369 (YDQRNTGIYLTGLQQVG), 371 to 381 (FTFEGAARSDD), 385 to 400 (FGRHGTWQTSAGWEFI), 403 to 417 (YRFIASYGTSYKAPN), 434 to 443 (KSKQWEGAFE), 449 to 458 (VNWRISGYRN), 473 to 490 (YYNEGKARIKGVEATANF), 494 to 509 (PLTHTVSYDYVDARNA), 517 to 529 (RRAKQQVKYQLDW), and 535 to 550 (DWGITYQYLGTRYDKD). Position 309 (threonine 309) interacts with cyanocob(III)alamin. Residue arginine 517 participates in cyanocob(III)alamin binding. Position 551 (tyrosine 551) interacts with cyanocob(III)alamin. Beta stranded transmembrane passes span 558 to 572 (TVKMGGVSLWDLAVA), 585 to 596 (IANLFDKDYETV), and 602 to 614 (AGREYTLSGSYTF). A TonB C-terminal box motif is present at residues 597–614 (YGYQTAGREYTLSGSYTF).

This sequence belongs to the TonB-dependent receptor family. BtuB (TC 1.B.14.3.1) subfamily.

The protein resides in the cell outer membrane. In terms of biological role, involved in the active translocation of vitamin B12 (cyanocobalamin) across the outer membrane to the periplasmic space. It derives its energy for transport by interacting with the trans-periplasmic membrane protein TonB. This chain is Vitamin B12 transporter BtuB, found in Shigella dysenteriae serotype 1 (strain Sd197).